The following is a 284-amino-acid chain: Putative xyloglucan endotransglucosylase/hydrolase protein 13 (284 aa).

An N-terminal signal peptide occupies residues 1–24; that stretch reads MAAFTTKQSLLLLSLLLLISLSAG. The GH16 domain occupies 25 to 214; that stretch reads SFYDNFDITW…WTNAPFSASY (190 aa). Residue glutamate 100 is the Nucleophile of the active site. Glutamate 104 (proton donor) is an active-site residue. Glutamate 104 provides a ligand contact to xyloglucan. N-linked (GlcNAc...) asparagine glycosylation is present at asparagine 108. Residues 117 to 119, 127 to 129, 193 to 194, and glycine 198 contribute to the xyloglucan site; these read HTN, NRE, and DW. 2 disulfides stabilise this stretch: cysteine 223–cysteine 234 and cysteine 267–cysteine 281. Arginine 272 contributes to the xyloglucan binding site.

The protein belongs to the glycosyl hydrolase 16 family. XTH group 2 subfamily. In terms of processing, contains at least one intrachain disulfide bond essential for its enzymatic activity.

It localises to the secreted. Its subcellular location is the cell wall. It is found in the extracellular space. The protein resides in the apoplast. It carries out the reaction breaks a beta-(1-&gt;4) bond in the backbone of a xyloglucan and transfers the xyloglucanyl segment on to O-4 of the non-reducing terminal glucose residue of an acceptor, which can be a xyloglucan or an oligosaccharide of xyloglucan.. May catalyze xyloglucan endohydrolysis (XEH) and/or endotransglycosylation (XET). Cleaves and religates xyloglucan polymers, an essential constituent of the primary cell wall, and thereby participates in cell wall construction of growing tissues. This Arabidopsis thaliana (Mouse-ear cress) protein is Putative xyloglucan endotransglucosylase/hydrolase protein 13 (XTH13).